We begin with the raw amino-acid sequence, 345 residues long: Nuclear distribution protein nudE-like 1 (345 aa).

Positions 28–190 form a coiled coil; that stretch reads QSFQEARDEL…LAVRERQQEV (163 aa). The interval 56 to 166 is self-association; sequence VQAEQRNRDL…LDEKESLLVS (111 aa). The interval 64-189 is interaction with KATNB1; it reads DLQADNQRLK…ELAVRERQQE (126 aa). The required for interaction with PAFAH1B1 stretch occupies residues 114 to 133; sequence YVRELEQANDDLERAKRATI. Residues 175 to 345 form an interaction with CENPF region; sequence RDLRQELAVR…SAPGMLPLSV (171 aa). Positions 189–256 are interaction with YWHAE; the sequence is EVTRKSAPSS…SARISALNIV (68 aa). The segment at 191 to 345 is interaction with NEFL; sequence TRKSAPSSPT…SAPGMLPLSV (155 aa). The interaction with KATNA1 stretch occupies residues 195-256; that stretch reads APSSPTLDCE…SARISALNIV (62 aa). At Ser-215 the chain carries Phosphoserine. The residue at position 219 (Thr-219) is a Phosphothreonine; by CDK1 and MAPK1. Ser-231 bears the Phosphoserine mark. The segment at 241-280 is interaction with DISC1; the sequence is TSPLTPSARISALNIVGDLLRKVGALESKLAACRNFAKDQ. Ser-242 bears the Phosphoserine; by CDK1 mark. Thr-245 carries the phosphothreonine; by CDK1 and MAPK1 modification. The tract at residues 256-291 is required for localization to the centrosome and interaction with dynein, dynactin, tubulin gamma, PCM1 and PCNT; that stretch reads VGDLLRKVGALESKLAACRNFAKDQASRKSYISGNV. Cys-273 is lipidated: S-palmitoyl cysteine; by ZDHHC2, ZDHHC3 and ZDHHC7. The segment at 315 to 345 is disordered; the sequence is GAVNGFDPAPPPPGLGSSRPSSAPGMLPLSV. Positions 329 to 339 are enriched in low complexity; the sequence is LGSSRPSSAPG. Ser-344 bears the Phosphoserine mark.

This sequence belongs to the nudE family. In terms of assembly, self-associates. Interacts with DISC1, dynein, dynactin, tubulin gamma, KATNA1, KATNB1, microtubules, PAFAH1B1, PCM1, PCNT, and YWHAE. Interacts directly with NEFL and indirectly with NEFH. Interacts (via C-terminus) with CENPF. Interacts with ZNF365. Interacts with PLEKHM1 (via N- and C-terminus). Interacts with GTP-bound RAB9A; the interaction may lead to RAB9A-dynein motor tethering. Post-translationally, phosphorylated in mitosis. Can be phosphorylated by CDK1, CDK5 and MAPK1. Phosphorylation by CDK5 promotes interaction with KATNA1 and YWHAE. Palmitoylation at Cys-273 reduces affinity for dynein.

The protein localises to the cytoplasm. It localises to the cytoskeleton. It is found in the microtubule organizing center. The protein resides in the centrosome. Its subcellular location is the chromosome. The protein localises to the centromere. It localises to the kinetochore. It is found in the spindle. Functionally, required for organization of the cellular microtubule array and microtubule anchoring at the centrosome. May regulate microtubule organization at least in part by targeting the microtubule severing protein KATNA1 to the centrosome. Also positively regulates the activity of the minus-end directed microtubule motor protein dynein. May enhance dynein-mediated microtubule sliding by targeting dynein to the microtubule plus ends. Required for several dynein- and microtubule-dependent processes such as the maintenance of Golgi integrity, the centripetal motion of secretory vesicles and the coupling of the nucleus and centrosome. Also required during brain development for the migration of newly formed neurons from the ventricular/subventricular zone toward the cortical plate. Plays a role, together with DISC1, in the regulation of neurite outgrowth. Required for mitosis in some cell types but appears to be dispensible for mitosis in cortical neuronal progenitors, which instead requires NDE1. Facilitates the polymerization of neurofilaments from the individual subunits NEFH and NEFL. Positively regulates lysosome peripheral distribution and ruffled border formation in osteoclasts. Plays a role, together with DISC1, in the regulation of neurite outgrowth. May act as a RAB9A/B effector that tethers RAB9-associated late endosomes to the dynein motor for their retrograde transport to the trans-Golgi network. The protein is Nuclear distribution protein nudE-like 1 (NDEL1) of Pongo abelii (Sumatran orangutan).